A 369-amino-acid polypeptide reads, in one-letter code: Trichocyst matrix protein T1-B (369 aa).

Residues 1–16 (MYKLAVCTLLILSVTA) form the signal peptide. The propeptide occupies 17–55 (IDVTNSVWTSHDQKAFAQIKQSGWGNFILNFGELHLQTG). Residues 56–180 (GILAELNTEI…AIDESLQLLS (125 aa)) are a coiled coil. A propeptide spanning residues 190–225 (IQKVQKNLTKIQQSLKRHSTFQTFIKTLLEIAVEAN) is cleaved from the precursor. Residues 262-354 (KDFEARVIQL…AHQALDLLNQ (93 aa)) are a coiled coil.

This sequence belongs to the TMP family. Two components are produced by post-translational processing from the precursor peptide.

It localises to the trichocyst. Its function is as follows. Structural protein that crystallize inside the trichocyst matrix. The protein is Trichocyst matrix protein T1-B (T1B) of Paramecium tetraurelia.